A 107-amino-acid polypeptide reads, in one-letter code: Essential MCU regulator, mitochondrial (107 aa).

The transit peptide at 1-47 (MASTAARRLAWVAVRPGALWSGPRGRRGGDVYTVPGSSGLSQVPSRS) directs the protein to the mitochondrion. Over 48–65 (VIVTRSGAILPKPVKMSF) the chain is Mitochondrial matrix. The chain crosses the membrane as a helical span at residues 66-85 (GLLRVFSIVIPFLYVGTLIS). Residues 81–85 (GTLIS) carry the GXXXX[G/A/S] motif. Topologically, residues 86–107 (KNFAALLEEHDIFVPEDDDDDD) are mitochondrial intermembrane.

The protein belongs to the SMDT1/EMRE family. As to quaternary structure, component of the uniplex complex, composed of MCU, EMRE/SMDT1, MICU1 and MICU2 (or MICU3) in a 4:4:1:1 stoichiometry. The number of EMRE/SMDT1 molecules is hovewer variable, ranging from 1 to 4 copies per uniplex complex, leading to uniplex complexes with distinct gatekeeping profiles. Interacts (via its C-terminal poly-Asp tail) with MCUR1; the interaction is direct. Unprocessed form interacts (via transit peptide) with MAIP1. Post-translationally, undergoes proteolytic degradation in neurons: degraded by AFG3L2 and SPG7 before SMDT1/EMRE assembly with the uniporter complex, limiting the availability of SMDT1/EMRE for MCU assembly and promoting efficient assembly of gatekeeper subunits with MCU. In terms of tissue distribution, widely expressed.

The protein localises to the mitochondrion inner membrane. Functionally, essential regulatory subunit of the mitochondrial calcium uniporter complex (uniplex), a complex that mediates calcium uptake into mitochondria. Required to bridge the calcium-sensing proteins MICU1 with the calcium-conducting subunit MCU. Acts by mediating activation of MCU and retention of MICU1 to the MCU pore, in order to ensure tight regulation of the uniplex complex and appropriate responses to intracellular calcium signaling. In Mus musculus (Mouse), this protein is Essential MCU regulator, mitochondrial.